Reading from the N-terminus, the 180-residue chain is Colicin-E5 (180 aa).

Disordered regions lie at residues 24 to 143 (AQTD…GSPG) and 155 to 180 (VTQISDKTDPGWVDDSRIQWGNKNDQ). The span at 54–76 (ESRKKKEDNKRDAEGKLNDELAK) shows a compositional bias: basic and acidic residues. The nuclease stretch occupies residues 74–180 (LAKNKGKIPG…RIQWGNKNDQ (107 aa)). Residues 106–116 (NTVSNGATGTS) show a composition bias toward polar residues. Basic and acidic residues predominate over residues 160–171 (DKTDPGWVDDSR).

This sequence belongs to the colicin/pyosin nuclease family.

In terms of biological role, colicins are polypeptide toxins produced by and active against E.coli and closely related bacteria. This colicin is an endonuclease. The protein is Colicin-E5 (col) of Escherichia coli.